A 493-amino-acid polypeptide reads, in one-letter code: Glutamyl-tRNA(Gln) amidotransferase subunit A (493 aa).

Residues K78 and S158 each act as charge relay system in the active site. The active-site Acyl-ester intermediate is S182.

Belongs to the amidase family. GatA subfamily. Heterotrimer of A, B and C subunits.

It catalyses the reaction L-glutamyl-tRNA(Gln) + L-glutamine + ATP + H2O = L-glutaminyl-tRNA(Gln) + L-glutamate + ADP + phosphate + H(+). Its function is as follows. Allows the formation of correctly charged Gln-tRNA(Gln) through the transamidation of misacylated Glu-tRNA(Gln) in organisms which lack glutaminyl-tRNA synthetase. The reaction takes place in the presence of glutamine and ATP through an activated gamma-phospho-Glu-tRNA(Gln). The protein is Glutamyl-tRNA(Gln) amidotransferase subunit A of Rickettsia felis (strain ATCC VR-1525 / URRWXCal2) (Rickettsia azadi).